A 790-amino-acid chain; its full sequence is Alpha,alpha-trehalose-phosphate synthase [UDP-forming] B (790 aa).

In the N-terminal section; belongs to the glycosyltransferase 20 family. It in the C-terminal section; belongs to the trehalose phosphatase family.

The enzyme catalyses D-glucose 6-phosphate + UDP-alpha-D-glucose = alpha,alpha-trehalose 6-phosphate + UDP + H(+). In terms of biological role, synthesizes trehalose 6-phosphate, the precursor for the production of trehalose, the main carbohydrate storage reserve of the dormant spore. Trehalose accumulates in both prestalk and prespore cells and then is rapidly metabolized during terminal differentiation of stalk cells, while being stored in spores, where it serves as the principal energy and carbon source for germination. In Dictyostelium discoideum (Social amoeba), this protein is Alpha,alpha-trehalose-phosphate synthase [UDP-forming] B (tpsB).